Consider the following 104-residue polypeptide: Large ribosomal subunit protein uL24 (104 aa).

The protein belongs to the universal ribosomal protein uL24 family. As to quaternary structure, part of the 50S ribosomal subunit.

In terms of biological role, one of two assembly initiator proteins, it binds directly to the 5'-end of the 23S rRNA, where it nucleates assembly of the 50S subunit. Functionally, one of the proteins that surrounds the polypeptide exit tunnel on the outside of the subunit. The polypeptide is Large ribosomal subunit protein uL24 (Nitrobacter hamburgensis (strain DSM 10229 / NCIMB 13809 / X14)).